Here is a 393-residue protein sequence, read N- to C-terminus: 4-hydroxyphenylpyruvate dioxygenase (393 aa).

VOC domains are found at residues 17-148 (AFDH…LLER) and 179-339 (FLDH…IFSK). The Fe cation site is built by H182, H267, and E350.

It belongs to the 4HPPD family. The cofactor is Fe cation.

The enzyme catalyses 3-(4-hydroxyphenyl)pyruvate + O2 = homogentisate + CO2. The protein operates within amino-acid degradation; L-phenylalanine degradation; acetoacetate and fumarate from L-phenylalanine: step 3/6. Key enzyme in the degradation of tyrosine. This Caenorhabditis briggsae protein is 4-hydroxyphenylpyruvate dioxygenase (hpd-1).